The chain runs to 51 residues: Insulin (51 aa).

3 cysteine pairs are disulfide-bonded: cysteine 7-cysteine 37, cysteine 19-cysteine 50, and cysteine 36-cysteine 41.

Belongs to the insulin family. As to quaternary structure, heterodimer of a B chain and an A chain linked by two disulfide bonds.

It localises to the secreted. Functionally, insulin decreases blood glucose concentration. It increases cell permeability to monosaccharides, amino acids and fatty acids. It accelerates glycolysis, the pentose phosphate cycle, and glycogen synthesis in liver. The protein is Insulin (INS) of Camelus dromedarius (Dromedary).